The sequence spans 54 residues: UPF0235 protein in proC 3'region (54 aa).

The protein belongs to the UPF0235 family.

This chain is UPF0235 protein in proC 3'region, found in Vibrio alginolyticus.